We begin with the raw amino-acid sequence, 201 residues long: ATP-dependent Clp protease proteolytic subunit (201 aa).

Ser-101 serves as the catalytic Nucleophile. His-126 is a catalytic residue.

Belongs to the peptidase S14 family. As to quaternary structure, fourteen ClpP subunits assemble into 2 heptameric rings which stack back to back to give a disk-like structure with a central cavity, resembling the structure of eukaryotic proteasomes.

It localises to the cytoplasm. It catalyses the reaction Hydrolysis of proteins to small peptides in the presence of ATP and magnesium. alpha-casein is the usual test substrate. In the absence of ATP, only oligopeptides shorter than five residues are hydrolyzed (such as succinyl-Leu-Tyr-|-NHMec, and Leu-Tyr-Leu-|-Tyr-Trp, in which cleavage of the -Tyr-|-Leu- and -Tyr-|-Trp bonds also occurs).. Its function is as follows. Cleaves peptides in various proteins in a process that requires ATP hydrolysis. Has a chymotrypsin-like activity. Plays a major role in the degradation of misfolded proteins. The protein is ATP-dependent Clp protease proteolytic subunit of Francisella philomiragia subsp. philomiragia (strain ATCC 25017 / CCUG 19701 / FSC 153 / O#319-036).